The primary structure comprises 1187 residues: Serine/threonine-protein kinase SIK3 homolog (1187 aa).

A compositionally biased stretch (low complexity) spans 1–15 (MAAVSSGAAAAAGIP). Residues 1–41 (MAAVSSGAAAAAGIPNPNPNRERPQQQQQQQPASAALHPVA) form a disordered region. A Protein kinase domain is found at 59–310 (YEMERTIGKG…MEQICKNKWM (252 aa)). ATP is bound by residues 65 to 73 (IGKGNFAVV) and lysine 88. The active-site Proton acceptor is aspartate 181. Threonine 214 is subject to Phosphothreonine. The residue at position 218 (serine 218) is a Phosphoserine. The UBA domain occupies 337–377 (LINEQVLMAMAEMGFDRERTLQSLHADSYDHYSATYSLLSD). Disordered stretches follow at residues 548–587 (LKRP…VQRS), 697–776 (IQPS…PPGS), and 1060–1092 (CADA…GALQ). Acidic residues predominate over residues 570–581 (VDEEGSDAEPDP). The span at 739 to 749 (VQYQHGSALYQ) shows a compositional bias: polar residues.

The protein belongs to the protein kinase superfamily. CAMK Ser/Thr protein kinase family. SNF1 subfamily. The cofactor is Mg(2+).

The catalysed reaction is L-seryl-[protein] + ATP = O-phospho-L-seryl-[protein] + ADP + H(+). It carries out the reaction L-threonyl-[protein] + ATP = O-phospho-L-threonyl-[protein] + ADP + H(+). The protein is Serine/threonine-protein kinase SIK3 homolog of Danio rerio (Zebrafish).